A 148-amino-acid polypeptide reads, in one-letter code: 3-dehydroquinate dehydratase (148 aa).

Tyrosine 24 functions as the Proton acceptor in the catalytic mechanism. Residues asparagine 75, histidine 81, and aspartate 88 each contribute to the substrate site. The active-site Proton donor is histidine 101. Substrate is bound by residues 102–103 and arginine 112; that span reads LS.

It belongs to the type-II 3-dehydroquinase family. In terms of assembly, homododecamer.

The catalysed reaction is 3-dehydroquinate = 3-dehydroshikimate + H2O. Its pathway is metabolic intermediate biosynthesis; chorismate biosynthesis; chorismate from D-erythrose 4-phosphate and phosphoenolpyruvate: step 3/7. Functionally, catalyzes a trans-dehydration via an enolate intermediate. This Bartonella henselae (strain ATCC 49882 / DSM 28221 / CCUG 30454 / Houston 1) (Rochalimaea henselae) protein is 3-dehydroquinate dehydratase.